A 604-amino-acid polypeptide reads, in one-letter code: UvrABC system protein C (604 aa).

One can recognise a GIY-YIG domain in the interval 17 to 95; it reads SQPGVYRMLN…IKSLAPRYNI (79 aa). The UVR domain occupies 204-239; it reads DEVLKTIEQKMFEASDRQAYEQAVLFRDQMQALRMI.

The protein belongs to the UvrC family. Interacts with UvrB in an incision complex.

The protein resides in the cytoplasm. In terms of biological role, the UvrABC repair system catalyzes the recognition and processing of DNA lesions. UvrC both incises the 5' and 3' sides of the lesion. The N-terminal half is responsible for the 3' incision and the C-terminal half is responsible for the 5' incision. This chain is UvrABC system protein C, found in Nitrosomonas eutropha (strain DSM 101675 / C91 / Nm57).